Here is a 332-residue protein sequence, read N- to C-terminus: Putative D-threonate 4-phosphate dehydrogenase (332 aa).

Residues histidine 138 and threonine 139 each contribute to the substrate site. 3 residues coordinate a divalent metal cation: histidine 168, histidine 211, and histidine 266. Substrate is bound by residues lysine 274 and arginine 292.

Belongs to the PdxA family. PdxA2 subfamily. Homodimer. A divalent metal cation serves as cofactor.

It carries out the reaction 4-O-phospho-D-threonate + NAD(+) = dihydroxyacetone phosphate + CO2 + NADH. Catalyzes the NAD-dependent oxidation and subsequent decarboxylation of D-threonate 4-phosphate to produce dihydroxyacetone phosphate (DHAP). This is Putative D-threonate 4-phosphate dehydrogenase from Fusobacterium nucleatum subsp. nucleatum (strain ATCC 25586 / DSM 15643 / BCRC 10681 / CIP 101130 / JCM 8532 / KCTC 2640 / LMG 13131 / VPI 4355).